A 1413-amino-acid polypeptide reads, in one-letter code: Zinc finger SWIM domain-containing protein 8 (1413 aa).

3 positions are modified to phosphoserine: S36, S48, and S53. Positions 45-65 are disordered; that stretch reads RKQSAGPNSPTGGGGGGGSGG. Residues 55–65 are compositionally biased toward gly residues; that stretch reads TGGGGGGGSGG. Residues 172 to 208 form an SWIM-type zinc finger; sequence YNVAVMFDRCRVTSCSCTCGAGAKWCTHVVALCLFRI. The segment at 600–817 is disordered; the sequence is ESQTHKPQTL…ESHAPHVPNQ (218 aa). Residues 604–625 show a composition bias toward polar residues; sequence HKPQTLSSFYSSSRPATASQRS. Positions 704–715 are enriched in gly residues; sequence SRGGYNGRGWGS. A Phosphothreonine modification is found at T724. Positions 729–744 are enriched in polar residues; sequence IDSSAPETTSDSSPTL. A phosphoserine mark is found at S738, S741, and S745. Positions 759 to 794 are enriched in low complexity; it reads GRGQDSDSISSSSSDSLGSSSSSGSRRASASGGARA. The segment covering 795–811 has biased composition (basic and acidic residues); it reads KTVEVGRYKGRRPESHA. Phosphoserine is present on residues S852 and S1412.

The protein belongs to the ZSWIM8 family. Component of the SCF-like E3 ubiquitin-protein ligase complex which contains CUL3, RBX1, ELOB, ELOC and ZSWIM8. Interacts with DAB1.

The protein localises to the cytoplasm. It is found in the cytosol. It functions in the pathway protein modification; protein ubiquitination. In terms of biological role, substrate recognition component of a SCF-like E3 ubiquitin-protein ligase complex that promotes target-directed microRNA degradation (TDMD), a process that mediates degradation of microRNAs (miRNAs). The SCF-like E3 ubiquitin-protein ligase complex acts by catalyzing ubiquitination and subsequent degradation of AGO proteins (AGO1, AGO2, AGO3 and/or AGO4), thereby exposing miRNAs for degradation. Specifically recognizes and binds AGO proteins when they are engaged with a TDMD target. May also acts as a regulator of axon guidance: specifically recognizes misfolded ROBO3 and promotes its ubiquitination and subsequent degradation. Plays an essential role for proper embryonic development of heart and lung. Controls protein quality of DAB1, a key signal molecule for brain development, thus protecting its signaling strength. Mechanistically, recognizes intrinsically disordered regions of DAB1 and eliminates misfolded DAB1 that cannot be properly phosphorylated. The sequence is that of Zinc finger SWIM domain-containing protein 8 from Bos taurus (Bovine).